Consider the following 88-residue polypeptide: Antitoxin VapB21 (88 aa).

Functionally, antitoxin component of a type II toxin-antitoxin (TA) system. In Mycobacterium tuberculosis (strain CDC 1551 / Oshkosh), this protein is Antitoxin VapB21 (vapB21).